The chain runs to 248 residues: Isopentenyl phosphate kinase (248 aa).

7–11 (KLGGS) contacts ATP. Gly-49 serves as a coordination point for substrate. Gly-50 provides a ligand contact to ATP. Substrate contacts are provided by His-54 and Gly-152. Gly-209 and Lys-213 together coordinate ATP.

This sequence belongs to the isopentenyl phosphate kinase family. As to quaternary structure, homodimer.

It carries out the reaction isopentenyl phosphate + ATP = isopentenyl diphosphate + ADP. Functionally, catalyzes the phosphorylation of isopentenyl phosphate (IP) to isopentenyl diphosphate (IPP). Functions in an alternate mevalonate (MVA) pathway leading to IPP, a key precursor for the biosynthesis of isoprenoid compounds such as archaeal membrane lipids. This chain is Isopentenyl phosphate kinase, found in Haloferax volcanii (strain ATCC 29605 / DSM 3757 / JCM 8879 / NBRC 14742 / NCIMB 2012 / VKM B-1768 / DS2) (Halobacterium volcanii).